A 294-amino-acid chain; its full sequence is Flagellin B1 (294 aa).

The propeptide occupies 1–8 (MKTRTRKG).

It belongs to the archaeal flagellin family.

It localises to the archaeal flagellum. In terms of biological role, flagellin is the subunit protein which polymerizes to form the filaments of archaeal flagella. The chain is Flagellin B1 (flaB1) from Thermococcus kodakarensis (strain ATCC BAA-918 / JCM 12380 / KOD1) (Pyrococcus kodakaraensis (strain KOD1)).